The chain runs to 416 residues: Imidazolonepropionase (416 aa).

2 residues coordinate Fe(3+): His82 and His84. Zn(2+) contacts are provided by His82 and His84. Positions 91, 154, and 187 each coordinate 4-imidazolone-5-propanoate. Tyr154 is an N-formimidoyl-L-glutamate binding site. His252 lines the Fe(3+) pocket. A Zn(2+)-binding site is contributed by His252. Glu255 is a binding site for 4-imidazolone-5-propanoate. Position 326 (Asp326) interacts with Fe(3+). Asp326 lines the Zn(2+) pocket. Residues Asn328 and Gly330 each contribute to the N-formimidoyl-L-glutamate site. Position 331 (Ser331) interacts with 4-imidazolone-5-propanoate.

It belongs to the metallo-dependent hydrolases superfamily. HutI family. It depends on Zn(2+) as a cofactor. The cofactor is Fe(3+).

Its subcellular location is the cytoplasm. It carries out the reaction 4-imidazolone-5-propanoate + H2O = N-formimidoyl-L-glutamate. Its pathway is amino-acid degradation; L-histidine degradation into L-glutamate; N-formimidoyl-L-glutamate from L-histidine: step 3/3. Its function is as follows. Catalyzes the hydrolytic cleavage of the carbon-nitrogen bond in imidazolone-5-propanoate to yield N-formimidoyl-L-glutamate. It is the third step in the universal histidine degradation pathway. The polypeptide is Imidazolonepropionase (Parabacteroides distasonis (strain ATCC 8503 / DSM 20701 / CIP 104284 / JCM 5825 / NCTC 11152)).